A 317-amino-acid polypeptide reads, in one-letter code: tRNA dimethylallyltransferase (317 aa).

14-21 (GPTAVGKT) serves as a coordination point for ATP. 16–21 (TAVGKT) is a substrate binding site. The segment at 39 to 42 (DSMQ) is interaction with substrate tRNA.

This sequence belongs to the IPP transferase family. Monomer. Requires Mg(2+) as cofactor.

The catalysed reaction is adenosine(37) in tRNA + dimethylallyl diphosphate = N(6)-dimethylallyladenosine(37) in tRNA + diphosphate. Its function is as follows. Catalyzes the transfer of a dimethylallyl group onto the adenine at position 37 in tRNAs that read codons beginning with uridine, leading to the formation of N6-(dimethylallyl)adenosine (i(6)A). The polypeptide is tRNA dimethylallyltransferase (Bacillus cereus (strain Q1)).